The chain runs to 248 residues: Kallikrein-12 (248 aa).

The N-terminal stretch at 1–17 (MGLSIFLLLCVLGLSQA) is a signal peptide. Positions 22–246 (IFNGTECGRN…YVDWIRMIMR (225 aa)) constitute a Peptidase S1 domain. N24 carries N-linked (GlcNAc...) asparagine glycosylation. Intrachain disulfides connect C28–C161, C47–C63, C133–C235, C140–C206, C172–C186, and C196–C222. Active-site charge relay system residues include H62 and D108. An N-linked (GlcNAc...) asparagine glycan is attached at N163. S200 acts as the Charge relay system in catalysis.

The protein belongs to the peptidase S1 family. Kallikrein subfamily.

The protein resides in the secreted. This is Kallikrein-12 (KLK12) from Homo sapiens (Human).